The chain runs to 144 residues: UPF0102 protein sce2912 (144 aa).

Belongs to the UPF0102 family.

The chain is UPF0102 protein sce2912 from Sorangium cellulosum (strain So ce56) (Polyangium cellulosum (strain So ce56)).